Here is a 263-residue protein sequence, read N- to C-terminus: Metaxin-2 (263 aa).

An N-acetylserine modification is found at serine 2.

This sequence belongs to the metaxin family. In terms of assembly, interacts with MTX1/metaxin-1. Associates with the mitochondrial contact site and cristae organizing system (MICOS) complex, composed of at least MICOS10/MIC10, CHCHD3/MIC19, CHCHD6/MIC25, APOOL/MIC27, IMMT/MIC60, APOO/MIC23/MIC26 and QIL1/MIC13. This complex was also known under the names MINOS or MitOS complex. The MICOS complex associates with mitochondrial outer membrane proteins SAMM50, MTX1 and MTX2 (together described as components of the mitochondrial outer membrane sorting assembly machinery (SAM) complex) and DNAJC11, mitochondrial inner membrane protein TMEM11 and with HSPA9. The MICOS and SAM complexes together with DNAJC11 are part of a large protein complex spanning both membranes termed the mitochondrial intermembrane space bridging (MIB) complex.

It is found in the mitochondrion outer membrane. Its subcellular location is the mitochondrion. Functionally, involved in transport of proteins into the mitochondrion. In Homo sapiens (Human), this protein is Metaxin-2 (MTX2).